Here is a 420-residue protein sequence, read N- to C-terminus: Nucleobindin-2 (420 aa).

The first 24 residues, 1–24, serve as a signal peptide directing secretion; that stretch reads MRWRTILLQYCFLLITCLLTALEA. A DNA-binding region spans residues 171–223; sequence KTRHEEFKKYEMMKEHERREYLKTLNEEKRKEEESKFEEMKKKHENHPKVNHP. A compositionally biased stretch (basic and acidic residues) spans 195-212; the sequence is LNEEKRKEEESKFEEMKK. The interval 195–225 is disordered; sequence LNEEKRKEEESKFEEMKKKHENHPKVNHPGS. The interval 213–420 is binds to necdin; it reads KHENHPKVNH…AGELKFEPHI (208 aa). 2 EF-hand domains span residues 241 to 276 and 293 to 328; these read PNDF…ELEK and ERLR…KEFL. Ca(2+) is bound by residues aspartate 254 and asparagine 256. Serine 257 bears the Phosphoserine mark. Ca(2+)-binding residues include aspartate 258, glutamate 265, aspartate 306, asparagine 308, aspartate 310, and glutamate 317. A GBA motif is present at residues 304–334; it reads EVDTNKDRLVTLEEFLKATEKKEFLEPDSWE. Serine 332 carries the post-translational modification Phosphoserine. Positions 398-420 are disordered; sequence QKKLQQGIPPSGPAGELKFEPHI.

This sequence belongs to the nucleobindin family. Interacts (via GBA motif) with guanine nucleotide-binding protein G(i) alpha subunit GNAI3. Preferentially interacts with inactive rather than active GNAI3. Interaction with GNAI3 is inhibited when NUCB2 binds calcium, probably due to a conformational change which renders the GBA motif inaccessible. Binds to the postmitotic growth suppressor NDN; coexpression abolishes NUCB2 secretion. Interacts with MC4R. In terms of tissue distribution, predominantly expressed in spleen, testis and normal stomach.

The protein localises to the golgi apparatus. It localises to the membrane. It is found in the cytoplasm. Its subcellular location is the secreted. The protein resides in the endoplasmic reticulum. The protein localises to the nucleus envelope. Its function is as follows. Calcium-binding protein which may have a role in calcium homeostasis. Acts as a non-receptor guanine nucleotide exchange factor which binds to and activates guanine nucleotide-binding protein (G-protein) alpha subunit GNAI3. Functionally, anorexigenic peptide, seems to play an important role in hypothalamic pathways regulating food intake and energy homeostasis, acting in a leptin-independent manner. May also exert hypertensive roles and modulate blood pressure through directly acting on peripheral arterial resistance. In intestinal epithelial cells, plays a role in the inhibition of hepatic glucose production via MC4R receptor leading to increased cyclic adenosine monophosphate (cAMP) levels and glucagon-like peptide 1 (GLP-1) secretion. The protein is Nucleobindin-2 of Homo sapiens (Human).